A 327-amino-acid chain; its full sequence is MTATKQHKKVILVGDGAVGSSYAFALVTQNIAQELGIIDIFKEKTQGDAEDLSHALAFTSPKKIYAAEYSDCHDADLVVLTAGAPQKPGETRLDLVEKNLRINKEVVTQIVASGFNGIFLVAANPVDVLTYSTWKFSGFPKERVIGSGTSLDSARFRQALADKIGVDARSVHAYIMGEHGDSEFAVWSHANVAGVKLEQWLQDNRDIDEQGLIDLFVSVRDAAYSIINKKGATFYGIAVALARITKAILDDENAVLPLSVFQEGQYEGVEDCYIGQPAIVGAYGVVRPVNIPLNDAELQKMQASAKQLKDIIDEAFAKEEFASVAKN.

NAD(+) is bound by residues Val-18, Asp-39, Lys-44, Tyr-69, and 83 to 84 (GA). Residues Gln-86, Arg-92, and 124-127 (NPVD) each bind substrate. Residues 122 to 124 (AAN) and Ser-147 each bind NAD(+). 152–155 (DSAR) serves as a coordination point for substrate. Beta-D-fructose 1,6-bisphosphate-binding residues include Arg-157 and His-172. His-179 functions as the Proton acceptor in the catalytic mechanism. A Phosphotyrosine modification is found at Tyr-224. Thr-233 is a binding site for substrate.

It belongs to the LDH/MDH superfamily. LDH family. In terms of assembly, homotetramer.

Its subcellular location is the cytoplasm. The catalysed reaction is (S)-lactate + NAD(+) = pyruvate + NADH + H(+). It participates in fermentation; pyruvate fermentation to lactate; (S)-lactate from pyruvate: step 1/1. With respect to regulation, allosterically activated by fructose 1,6-bisphosphate (FBP). Functionally, catalyzes the conversion of lactate to pyruvate. The polypeptide is L-lactate dehydrogenase (Streptococcus uberis (strain ATCC BAA-854 / 0140J)).